The sequence spans 108 residues: UPF0145 protein THA_1434 (108 aa).

It belongs to the UPF0145 family.

In Thermosipho africanus (strain TCF52B), this protein is UPF0145 protein THA_1434.